The sequence spans 277 residues: Ribosomal RNA small subunit methyltransferase A (277 aa).

Positions 15, 17, 42, 64, 89, and 109 each coordinate S-adenosyl-L-methionine.

The protein belongs to the class I-like SAM-binding methyltransferase superfamily. rRNA adenine N(6)-methyltransferase family. RsmA subfamily.

It is found in the cytoplasm. The catalysed reaction is adenosine(1518)/adenosine(1519) in 16S rRNA + 4 S-adenosyl-L-methionine = N(6)-dimethyladenosine(1518)/N(6)-dimethyladenosine(1519) in 16S rRNA + 4 S-adenosyl-L-homocysteine + 4 H(+). Specifically dimethylates two adjacent adenosines (A1518 and A1519) in the loop of a conserved hairpin near the 3'-end of 16S rRNA in the 30S particle. May play a critical role in biogenesis of 30S subunits. This is Ribosomal RNA small subunit methyltransferase A from Synechococcus sp. (strain CC9311).